A 153-amino-acid polypeptide reads, in one-letter code: Putative nuclear shuttle protein (153 aa).

The protein belongs to the nanoviridae nuclear shuttle protein family.

The protein resides in the host nucleus. Its subcellular location is the host cytoplasm. Its function is as follows. Putative nuclear shuttle protein. The chain is Putative nuclear shuttle protein (DNA-N) from Trifolium subterraneum (Subterranean clover).